The chain runs to 310 residues: Ribosomal RNA small subunit methyltransferase H (310 aa).

S-adenosyl-L-methionine contacts are provided by residues 32-34, Asp52, Phe79, Asp100, and Gln107; that span reads GGH.

The protein belongs to the methyltransferase superfamily. RsmH family.

The protein resides in the cytoplasm. It carries out the reaction cytidine(1402) in 16S rRNA + S-adenosyl-L-methionine = N(4)-methylcytidine(1402) in 16S rRNA + S-adenosyl-L-homocysteine + H(+). In terms of biological role, specifically methylates the N4 position of cytidine in position 1402 (C1402) of 16S rRNA. This Bacillus cereus (strain B4264) protein is Ribosomal RNA small subunit methyltransferase H.